Reading from the N-terminus, the 55-residue chain is MAKGGREKIKLESTAGTGHFYTTDKNKKLHPEKMELMKFDPKARKHVAYKEVKLK.

Residues 1–11 (MAKGGREKIKL) show a composition bias toward basic and acidic residues. A disordered region spans residues 1 to 26 (MAKGGREKIKLESTAGTGHFYTTDKN).

It belongs to the bacterial ribosomal protein bL33 family.

In Methylibium petroleiphilum (strain ATCC BAA-1232 / LMG 22953 / PM1), this protein is Large ribosomal subunit protein bL33.